Reading from the N-terminus, the 446-residue chain is Protein dyf-7 (446 aa).

A signal peptide spans 1–24 (MNQLWRASCLQVLITFLLIHQNKA). In terms of domain architecture, ZP spans 35 to 295 (DCIADSFTVV…KTCYKKVSDS (261 aa)). A disulfide bridge links cysteine 211 with cysteine 273. The helical transmembrane segment at 377-397 (IPLIIMGSLASLLLFSAGAAI) threads the bilayer.

As to quaternary structure, monomer under reducing conditions. Homodimer under non-reducing conditions. May also form higher order oligomers. Proteolytically cleaved and secreted in vitro. In the embryo, expressed in the excretory cell and, during dendrite formation, in the non-neuronal cells surrounding the sensory neurons, including hypodermal cells.

Its subcellular location is the cell membrane. The protein localises to the cell projection. It localises to the dendrite. It is found in the secreted. In terms of biological role, required for permeability of amphid and phasmid neurons to external dyes, chemotaxis to ammonium chloride, avoidance of high osmotic stimuli, male mating and dauer formation. Along with dex-1, enables neurite growth and maintenance by anchoring amphid dendritic tips during neuron cell body migration in embryonic and larval development. The polypeptide is Protein dyf-7 (Caenorhabditis elegans).